We begin with the raw amino-acid sequence, 342 residues long: UDP-glucuronic acid decarboxylase 3 (342 aa).

Residues 1–11 are compositionally biased toward polar residues; it reads MAATSEKQNTT. Residues 1-22 are disordered; sequence MAATSEKQNTTKPPPSPSPLRN. NAD(+) is bound at residue 61–86; it reads DNYFTGSKENLKKWIGHPRFELIRHD. Arg170 contributes to the substrate binding site. The active-site Proton acceptor is Tyr173. Residue 173-177 coordinates NAD(+); sequence YDEGK. Substrate is bound at residue Asn202. Position 214 (Arg214) interacts with NAD(+). Substrate contacts are provided by residues 215–219, 232–239, and 299–303; these read VVSNF, QKPGTQTR, and DPRQR.

This sequence belongs to the NAD(P)-dependent epimerase/dehydratase family. UDP-glucuronic acid decarboxylase subfamily. The cofactor is NAD(+). In terms of tissue distribution, ubiquitous.

It is found in the cytoplasm. The catalysed reaction is UDP-alpha-D-glucuronate + H(+) = UDP-alpha-D-xylose + CO2. It participates in nucleotide-sugar biosynthesis; UDP-alpha-D-xylose biosynthesis; UDP-alpha-D-xylose from UDP-alpha-D-glucuronate: step 1/1. Its function is as follows. Catalyzes the NAD-dependent decarboxylation of UDP-glucuronic acid to UDP-xylose. Necessary for the biosynthesis of the core tetrasaccharide in glycosaminoglycan biosynthesis. The sequence is that of UDP-glucuronic acid decarboxylase 3 (UXS3) from Arabidopsis thaliana (Mouse-ear cress).